The following is a 440-amino-acid chain: Chromosome partition protein MukF (440 aa).

Positions 208–236 are leucine-zipper; the sequence is LSETSGTLRELQDTLDAAGDKLQANLLRI.

Belongs to the MukF family. Interacts, and probably forms a ternary complex, with MukE and MukB via its C-terminal region. The complex formation is stimulated by calcium or magnesium. It is required for an interaction between MukE and MukB.

It is found in the cytoplasm. It localises to the nucleoid. Its function is as follows. Involved in chromosome condensation, segregation and cell cycle progression. May participate in facilitating chromosome segregation by condensation DNA from both sides of a centrally located replisome during cell division. Not required for mini-F plasmid partitioning. Probably acts via its interaction with MukB and MukE. Overexpression results in anucleate cells. It has a calcium binding activity. This is Chromosome partition protein MukF from Klebsiella pneumoniae subsp. pneumoniae (strain ATCC 700721 / MGH 78578).